The primary structure comprises 154 residues: Aspartate carbamoyltransferase regulatory chain (154 aa).

Positions 110, 115, 136, and 139 each coordinate Zn(2+).

This sequence belongs to the PyrI family. Contains catalytic and regulatory chains. Zn(2+) serves as cofactor.

Involved in allosteric regulation of aspartate carbamoyltransferase. The sequence is that of Aspartate carbamoyltransferase regulatory chain from Halobacterium salinarum (strain ATCC 700922 / JCM 11081 / NRC-1) (Halobacterium halobium).